We begin with the raw amino-acid sequence, 145 residues long: uncharacterized protein (145 aa).

Ser67 bears the Phosphoserine mark.

As to expression, expressed in retina and retinoblastoma.

This is an uncharacterized protein from Homo sapiens (Human).